The sequence spans 173 residues: Small ribosomal subunit protein mS25 (173 aa).

It belongs to the mitochondrion-specific ribosomal protein mS25 family. As to quaternary structure, component of the mitochondrial small ribosomal subunit (mt-SSU). Mature mammalian 55S mitochondrial ribosomes consist of a small (28S) and a large (39S) subunit. The 28S small subunit contains a 12S ribosomal RNA (12S mt-rRNA) and 30 different proteins. The 39S large subunit contains a 16S rRNA (16S mt-rRNA), a copy of mitochondrial valine transfer RNA (mt-tRNA(Val)), which plays an integral structural role, and 52 different proteins.

It is found in the mitochondrion. The polypeptide is Small ribosomal subunit protein mS25 (MRPS25) (Homo sapiens (Human)).